Reading from the N-terminus, the 543-residue chain is Dipeptide-binding protein DppE (543 aa).

The N-terminal stretch at 1-22 (MKRVKKLWGMGLALGLSFALMG) is a signal peptide. A lipid anchor (N-palmitoyl cysteine) is attached at Cys-23. Residue Cys-23 is the site of S-diacylglycerol cysteine attachment.

This sequence belongs to the bacterial solute-binding protein 5 family.

Its subcellular location is the cell membrane. In terms of biological role, probably part of the ABC transporter DppBCDE involved in dipeptide transport. This Bacillus subtilis (strain 168) protein is Dipeptide-binding protein DppE (dppE).